A 432-amino-acid chain; its full sequence is Gamma-glutamyl phosphate reductase (432 aa).

The protein belongs to the gamma-glutamyl phosphate reductase family.

The protein resides in the cytoplasm. The enzyme catalyses L-glutamate 5-semialdehyde + phosphate + NADP(+) = L-glutamyl 5-phosphate + NADPH + H(+). The protein operates within amino-acid biosynthesis; L-proline biosynthesis; L-glutamate 5-semialdehyde from L-glutamate: step 2/2. Its function is as follows. Catalyzes the NADPH-dependent reduction of L-glutamate 5-phosphate into L-glutamate 5-semialdehyde and phosphate. The product spontaneously undergoes cyclization to form 1-pyrroline-5-carboxylate. This chain is Gamma-glutamyl phosphate reductase, found in Corynebacterium melassecola.